Reading from the N-terminus, the 148-residue chain is Snaclec 3 (148 aa).

The signal sequence occupies residues 1 to 23 (MGRFISVSFGLLVVFLSLSGTEA). 3 disulfide bridges follow: Cys27–Cys38, Cys55–Cys144, and Cys121–Cys136. Positions 34 to 145 (YDQNCYKVFT…CSSTHNFVCK (112 aa)) constitute a C-type lectin domain.

Belongs to the snaclec family. In terms of assembly, heterodimer; disulfide-linked.

Its subcellular location is the secreted. In terms of biological role, interferes with one step of hemostasis (modulation of platelet aggregation, or coagulation cascade, for example). This Daboia siamensis (Eastern Russel's viper) protein is Snaclec 3.